The chain runs to 399 residues: Succinate--CoA ligase [ADP-forming] subunit beta (399 aa).

The ATP-grasp domain maps to 9–254; the sequence is KALLREFGVP…ESEEDAKEIE (246 aa). ATP is bound by residues K46, 53-55, E109, S112, and E117; that span reads GRG. Residues N209 and D223 each coordinate Mg(2+). Residues N274 and 331 to 333 each bind substrate; that span reads GIM.

This sequence belongs to the succinate/malate CoA ligase beta subunit family. Heterotetramer of two alpha and two beta subunits. Mg(2+) is required as a cofactor.

The catalysed reaction is succinate + ATP + CoA = succinyl-CoA + ADP + phosphate. It carries out the reaction GTP + succinate + CoA = succinyl-CoA + GDP + phosphate. It participates in carbohydrate metabolism; tricarboxylic acid cycle; succinate from succinyl-CoA (ligase route): step 1/1. Succinyl-CoA synthetase functions in the citric acid cycle (TCA), coupling the hydrolysis of succinyl-CoA to the synthesis of either ATP or GTP and thus represents the only step of substrate-level phosphorylation in the TCA. The beta subunit provides nucleotide specificity of the enzyme and binds the substrate succinate, while the binding sites for coenzyme A and phosphate are found in the alpha subunit. The polypeptide is Succinate--CoA ligase [ADP-forming] subunit beta (Nitrobacter winogradskyi (strain ATCC 25391 / DSM 10237 / CIP 104748 / NCIMB 11846 / Nb-255)).